The sequence spans 392 residues: S-adenosylmethionine synthase (392 aa).

Position 20 (His20) interacts with ATP. Residue Asp22 coordinates Mg(2+). Glu48 is a K(+) binding site. Glu61 and Gln106 together coordinate L-methionine. The flexible loop stretch occupies residues 106–116; that stretch reads QSQDIINAIKK. Residues 171–173, Asp248, 254–255, Ala271, and Lys275 each bind ATP; these read DSK and RK. An L-methionine-binding site is contributed by Asp248. An L-methionine-binding site is contributed by Lys279.

The protein belongs to the AdoMet synthase family. As to quaternary structure, homotetramer; dimer of dimers. It depends on Mg(2+) as a cofactor. Requires K(+) as cofactor.

The protein resides in the cytoplasm. It catalyses the reaction L-methionine + ATP + H2O = S-adenosyl-L-methionine + phosphate + diphosphate. It participates in amino-acid biosynthesis; S-adenosyl-L-methionine biosynthesis; S-adenosyl-L-methionine from L-methionine: step 1/1. Catalyzes the formation of S-adenosylmethionine (AdoMet) from methionine and ATP. The overall synthetic reaction is composed of two sequential steps, AdoMet formation and the subsequent tripolyphosphate hydrolysis which occurs prior to release of AdoMet from the enzyme. The polypeptide is S-adenosylmethionine synthase (Borrelia garinii subsp. bavariensis (strain ATCC BAA-2496 / DSM 23469 / PBi) (Borreliella bavariensis)).